The sequence spans 652 residues: Endoplasmic reticulum chaperone BiP (652 aa).

A signal peptide spans 1–16 (MRHLLLALLLLGGARA). Residues 34 to 37 (GTTY), lysine 94, 225 to 227 (GGT), 291 to 298 (EKAKRALS), and 362 to 365 (GSTR) each bind ATP. A nucleotide-binding (NBD) region spans residues 123–278 (KPHIQVDVGG…KKKTGKDVRK (156 aa)). The interval 407-417 (QDTGDLVLLDV) is interdomain linker. Positions 418-498 (CPLTLGIETV…PRGVPQIEVT (81 aa)) are substrate-binding (SBD). The interval 630 to 652 (SKLYGSAGPPPTGEEEAAEKDEL) is disordered. Positions 642-652 (GEEEAAEKDEL) are enriched in acidic residues. Residues 649-652 (KDEL) carry the Prevents secretion from ER motif.

Belongs to the heat shock protein 70 family. In terms of assembly, monomer and homooligomer; homooligomerization via the interdomain linker inactivates the chaperone activity and acts as a storage of HSPA5/BiP molecules. Interacts with DNAJC10. Interacts with DNAJB9/ERdj4; leading to recruit HSPA5/BiP to ERN1/IRE1. Interacts with ERN1/IRE1; interaction takes place following interaction with DNAJB9/ERdj4 and leads to inactivate ERN1/IRE1.

It localises to the endoplasmic reticulum lumen. The protein resides in the melanosome. The protein localises to the cytoplasm. Its subcellular location is the cell surface. It carries out the reaction ATP + H2O = ADP + phosphate + H(+). Its activity is regulated as follows. The chaperone activity is regulated by ATP-induced allosteric coupling of the nucleotide-binding (NBD) and substrate-binding (SBD) domains. In the ADP-bound and nucleotide-free (apo) states, the two domains have little interaction. In contrast, in the ATP-bound state the two domains are tightly coupled, which results in drastically accelerated kinetics in both binding and release of polypeptide substrates. J domain-containing co-chaperones (DNAJB9/ERdj4 or DNAJC10/ERdj5) stimulate the ATPase activity and are required for efficient substrate recognition by HSPA5/BiP. Homooligomerization inactivates participating HSPA5/BiP protomers and probably act as reservoirs to store HSPA5/BiP molecules when they are not needed by the cell. Functionally, endoplasmic reticulum chaperone that plays a key role in protein folding and quality control in the endoplasmic reticulum lumen. Involved in the correct folding of proteins and degradation of misfolded proteins via its interaction with DNAJC10/ERdj5, probably to facilitate the release of DNAJC10/ERdj5 from its substrate. Acts as a key repressor of the EIF2AK3/PERK and ERN1/IRE1-mediated unfolded protein response (UPR). In the unstressed endoplasmic reticulum, recruited by DNAJB9/ERdj4 to the luminal region of ERN1/IRE1, leading to disrupt the dimerization of ERN1/IRE1, thereby inactivating ERN1/IRE1. Also binds and inactivates EIF2AK3/PERK in unstressed cells. Accumulation of misfolded protein in the endoplasmic reticulum causes release of HSPA5/BiP from ERN1/IRE1 and EIF2AK3/PERK, allowing their homodimerization and subsequent activation. May also play a role in apoptosis and cell proliferation. The protein is Endoplasmic reticulum chaperone BiP of Gallus gallus (Chicken).